A 380-amino-acid chain; its full sequence is MAPNIRKSHPLLKTINNSLIDLPTPSNISAWWNFGSLLAVCLITQILTGLLLAMHYTADTTLAFSSVAYTCRNVQYGWLLHNLHANGASFFFICIFLHIGRGLYYGSYLYKETWNTGVVLLLTLMATAFVGYVLPWGQMSFWGATVITNLFSAIPYIGQTLVEWAWGGFSVDNPTLTRFFALHFLLPFMIAGITIIHLMFLHESGSNNPLGISSNADKIPFHPYYSIKDILGLTIMLTPLLTLTLFSPNLLGDPENFTPANPLVTPPHIKPEWYFLFAYAILRSIPNKLGGVLALAASVLILLLIPFLHKSKQRAMTFRPLSQTLFWLLVANLLILTWVGSQPVEHPFIIIGQMASLSYFTILLILFPLIGALENKMLNL.

Helical transmembrane passes span 34-54 (FGSLLAVCLITQILTGLLLAM), 78-99 (WLLHNLHANGASFFFICIFLHI), 114-134 (WNTGVVLLLTLMATAFVGYVL), and 179-199 (FFALHFLLPFMIAGITIIHLM). Residues His-84 and His-98 each contribute to the heme b site. The heme b site is built by His-183 and His-197. His-202 lines the a ubiquinone pocket. A run of 4 helical transmembrane segments spans residues 227-247 (IKDILGLTIMLTPLLTLTLFS), 289-309 (LGGVLALAASVLILLLIPFLH), 321-341 (LSQTLFWLLVANLLILTWVGS), and 348-368 (FIIIGQMASLSYFTILLILFP).

This sequence belongs to the cytochrome b family. The cytochrome bc1 complex contains 11 subunits: 3 respiratory subunits (MT-CYB, CYC1 and UQCRFS1), 2 core proteins (UQCRC1 and UQCRC2) and 6 low-molecular weight proteins (UQCRH/QCR6, UQCRB/QCR7, UQCRQ/QCR8, UQCR10/QCR9, UQCR11/QCR10 and a cleavage product of UQCRFS1). This cytochrome bc1 complex then forms a dimer. Heme b is required as a cofactor.

It is found in the mitochondrion inner membrane. In terms of biological role, component of the ubiquinol-cytochrome c reductase complex (complex III or cytochrome b-c1 complex) that is part of the mitochondrial respiratory chain. The b-c1 complex mediates electron transfer from ubiquinol to cytochrome c. Contributes to the generation of a proton gradient across the mitochondrial membrane that is then used for ATP synthesis. The chain is Cytochrome b (MT-CYB) from Meleagris gallopavo (Wild turkey).